The sequence spans 125 residues: Insulin growth factor-like family member 3 (125 aa).

The N-terminal stretch at 1 to 24 (MRPRCCILALVCWITVFLLQCSKG) is a signal peptide.

Belongs to the IGFL family. Detected in the cerebellum.

It is found in the secreted. In terms of biological role, potential ligand of the IGFLR1 cell membrane receptor. In Homo sapiens (Human), this protein is Insulin growth factor-like family member 3 (IGFL3).